We begin with the raw amino-acid sequence, 363 residues long: Flagellar P-ring protein (363 aa).

The first 20 residues, M1–A20, serve as a signal peptide directing secretion.

The protein belongs to the FlgI family. The basal body constitutes a major portion of the flagellar organelle and consists of four rings (L,P,S, and M) mounted on a central rod.

It is found in the periplasm. The protein localises to the bacterial flagellum basal body. Assembles around the rod to form the L-ring and probably protects the motor/basal body from shearing forces during rotation. In Shewanella amazonensis (strain ATCC BAA-1098 / SB2B), this protein is Flagellar P-ring protein.